Here is a 98-residue protein sequence, read N- to C-terminus: Large ribosomal subunit protein eL14 (98 aa).

This sequence belongs to the eukaryotic ribosomal protein eL14 family.

The sequence is that of Large ribosomal subunit protein eL14 from Thermofilum pendens (strain DSM 2475 / Hrk 5).